The following is a 335-amino-acid chain: Fructose-1,6-bisphosphatase class 1 (335 aa).

Positions 92, 114, 116, and 117 each coordinate Mg(2+). Substrate-binding positions include 117-120 (DGSS), N209, and K275. Position 281 (E281) interacts with Mg(2+).

The protein belongs to the FBPase class 1 family. As to quaternary structure, homotetramer. Requires Mg(2+) as cofactor.

It is found in the cytoplasm. The catalysed reaction is beta-D-fructose 1,6-bisphosphate + H2O = beta-D-fructose 6-phosphate + phosphate. It functions in the pathway carbohydrate biosynthesis; gluconeogenesis. The protein is Fructose-1,6-bisphosphatase class 1 of Paracidovorax citrulli (strain AAC00-1) (Acidovorax citrulli).